A 710-amino-acid chain; its full sequence is Protein-glutamine gamma-glutamyltransferase Z (710 aa).

Active-site residues include Cys279, His338, and Asp361. Ca(2+) is bound by residues Asn401, Asp403, Glu450, and Glu455.

Belongs to the transglutaminase superfamily. Transglutaminase family. Ca(2+) is required as a cofactor. As to expression, widely expressed.

The enzyme catalyses L-glutaminyl-[protein] + L-lysyl-[protein] = [protein]-L-lysyl-N(6)-5-L-glutamyl-[protein] + NH4(+). In terms of biological role, catalyzes the cross-linking of proteins and the conjugation of polyamines to proteins. This Homo sapiens (Human) protein is Protein-glutamine gamma-glutamyltransferase Z (TGM7).